The chain runs to 125 residues: Small ribosomal subunit protein uS13 (125 aa).

The tract at residues H91–K125 is disordered.

This sequence belongs to the universal ribosomal protein uS13 family. In terms of assembly, part of the 30S ribosomal subunit. Forms a loose heterodimer with protein S19. Forms two bridges to the 50S subunit in the 70S ribosome.

Functionally, located at the top of the head of the 30S subunit, it contacts several helices of the 16S rRNA. In the 70S ribosome it contacts the 23S rRNA (bridge B1a) and protein L5 of the 50S subunit (bridge B1b), connecting the 2 subunits; these bridges are implicated in subunit movement. Contacts the tRNAs in the A and P-sites. The sequence is that of Small ribosomal subunit protein uS13 from Chloroherpeton thalassium (strain ATCC 35110 / GB-78).